The sequence spans 1205 residues: PAN2-PAN3 deadenylation complex catalytic subunit Pan2 (1205 aa).

WD repeat units follow at residues 153 to 193 (DESE…QKYA), 195 to 231 (ETPGVTIMRQTNRFFFCGHTSGKVSLRDLRSFKVEHE), 244 to 280 (VHGNLLAACGFSSRLTGLACDRFLKVYDLRMMRAITP), and 328 to 367 (PVGPLLMTFDVSASKQALAFGDSEGCVHLWTDSPEPSFNP). A linker region spans residues 368–484 (YSRETEFALP…PTGREEEPLH (117 aa)). In terms of domain architecture, USP spans 485 to 924 (TVSKKYRKVT…VPAILYYVKR (440 aa)). Ser-784 bears the Phosphoserine mark. One can recognise an Exonuclease domain in the interval 975-1147 (VGLDAEFVTL…EDARTALQLY (173 aa)). 4 residues coordinate a divalent metal cation: Asp-978, Glu-980, Asp-1087, and Asp-1139. Residues 1179–1205 (WKVPEPESQSSPKSKAGLRPGALGWVG) are disordered. Residues 1184–1193 (PESQSSPKSK) show a composition bias toward low complexity. A Phosphoserine modification is found at Ser-1189.

The protein belongs to the peptidase C19 family. PAN2 subfamily. In terms of assembly, forms a heterotrimer with an asymmetric homodimer of the regulatory subunit PAN3 to form the poly(A)-nuclease (PAN) deadenylation complex. Interacts with PAN3 isoform 1/Pan3L and isoform 3/Pan3S. Interacts with ZFP36. Requires a divalent metal cation as cofactor.

The protein localises to the cytoplasm. The protein resides in the P-body. It localises to the nucleus. The enzyme catalyses Exonucleolytic cleavage of poly(A) to 5'-AMP.. Its activity is regulated as follows. Positively regulated by the regulatory subunit PAN3. Functionally, catalytic subunit of the poly(A)-nuclease (PAN) deadenylation complex, one of two cytoplasmic mRNA deadenylases involved in general and miRNA-mediated mRNA turnover. PAN specifically shortens poly(A) tails of RNA and the activity is stimulated by poly(A)-binding protein (PABP). PAN deadenylation is followed by rapid degradation of the shortened mRNA tails by the CCR4-NOT complex. Deadenylated mRNAs are then degraded by two alternative mechanisms, namely exosome-mediated 3'-5' exonucleolytic degradation, or deadenylation-dependent mRNA decaping and subsequent 5'-3' exonucleolytic degradation by XRN1. Also acts as an important regulator of the HIF1A-mediated hypoxic response. Required for HIF1A mRNA stability independent of poly(A) tail length regulation. In Rattus norvegicus (Rat), this protein is PAN2-PAN3 deadenylation complex catalytic subunit Pan2.